Here is a 210-residue protein sequence, read N- to C-terminus: 7-cyano-7-deazaguanine synthase 2 (210 aa).

10-20 (HSGGMDSTTCL) is an ATP binding site. Zn(2+)-binding residues include cysteine 180, cysteine 193, cysteine 196, and cysteine 199.

Belongs to the QueC family. Zn(2+) is required as a cofactor.

It catalyses the reaction 7-carboxy-7-deazaguanine + NH4(+) + ATP = 7-cyano-7-deazaguanine + ADP + phosphate + H2O + H(+). Its pathway is purine metabolism; 7-cyano-7-deazaguanine biosynthesis. Its function is as follows. Catalyzes the ATP-dependent conversion of 7-carboxy-7-deazaguanine (CDG) to 7-cyano-7-deazaguanine (preQ(0)). This chain is 7-cyano-7-deazaguanine synthase 2, found in Rhodopseudomonas palustris (strain HaA2).